The chain runs to 34 residues: Histone H1, sperm (34 aa).

Residues 1-34 (PASPQKRAASPRRSPKKSPRKSPKKSPRKRSASP) are disordered. Basic residues predominate over residues 9 to 34 (ASPRRSPKKSPRKSPKKSPRKRSASP).

The protein belongs to the histone H1/H5 family. Sperm.

The protein localises to the nucleus. It localises to the chromosome. Functionally, histones H1 are necessary for the condensation of nucleosome chains into higher-order structures. The sequence is that of Histone H1, sperm from Strongylocentrotus purpuratus (Purple sea urchin).